A 393-amino-acid chain; its full sequence is Na(+)/H(+) antiporter NhaA (393 aa).

11 helical membrane-spanning segments follow: residues 14–34 (AAGM…NWSV), 60–80 (LLLW…GLEV), 96–116 (MLPL…FLLF), 125–145 (AGWA…LTLL), 155–175 (VFLL…IALF), 179–199 (QVFW…AYMN), 218–238 (VCIL…GFFI), 263–283 (FLIV…GIVL), 292–312 (LGIA…FSWL), 330–350 (IVAV…ITLL), and 362–382 (YAKL…YLAL).

It belongs to the NhaA Na(+)/H(+) (TC 2.A.33) antiporter family.

It localises to the cell inner membrane. It carries out the reaction Na(+)(in) + 2 H(+)(out) = Na(+)(out) + 2 H(+)(in). In terms of biological role, na(+)/H(+) antiporter that extrudes sodium in exchange for external protons. In Pectobacterium atrosepticum (strain SCRI 1043 / ATCC BAA-672) (Erwinia carotovora subsp. atroseptica), this protein is Na(+)/H(+) antiporter NhaA.